Reading from the N-terminus, the 241-residue chain is MSDLPLDLVEEILSRVSATSLKRLRSTCKQWNTLFKKRSFSQKHFHIAPKESMVLMLKEYRVCSMNINLNVSPPSVEFQGTLGIKDDSHSNLGQVEIVEVYHCDGLLLCATRDNRLVVWNPCLGETRWIQLKDECRRYSTFALGYENNKFCRRNYKILRYWGWFHDHIPDDGGRFRFEIYDFRSDSWKVLDDVPDDRFPPRDLIILVFRHLEIMVLWLYQLLEKNNSQCYKRLRHQRWRYL.

The F-box domain occupies 1-44 (MSDLPLDLVEEILSRVSATSLKRLRSTCKQWNTLFKKRSFSQKH).

The sequence is that of F-box protein At3g22350 from Arabidopsis thaliana (Mouse-ear cress).